The following is a 96-amino-acid chain: Cytoplasmic envelopment protein 3 (96 aa).

Residue Gly-2 is the site of N-myristoyl glycine; by host attachment. The Di-leucine-like internalization motif signature appears at 18 to 19 (LI). The interval 37 to 43 (DIESEEE) is asp/Glu-rich (acidic). Ser-40 is modified (phosphoserine). Residues 57–96 (RAPGRQRLRSSDPPSRHTHRRTPGGACPATQFPPPMSDSE) are disordered. Positions 87–96 (QFPPPMSDSE) are enriched in pro residues.

This sequence belongs to the herpesviridae cytoplasmic envelopment protein 3 family. In terms of assembly, interacts with cytoplasmic envelopment protein 2; this interaction is essential for the proper localization of each protein to the assembly complex and thus for the production of infectious virus. Interacts with gE (via C-terminus). Interacts with gD (via C-terminus). Interacts with UL56. In terms of processing, myristoylation and palmitoylation (probably on one or more of the nearby cysteines at the N-terminus) enable membrane-binding and Golgi apparatus-specific targeting and are essential for efficient packaging. Phosphorylated. Phosphorylation does not seem to be required for recycling to the host Golgi apparatus. Packaging is selective for underphosphorylated forms.

Its subcellular location is the virion tegument. It localises to the virion membrane. The protein resides in the host cell membrane. The protein localises to the host Golgi apparatus membrane. Functionally, plays an important role in the cytoplasmic envelopment of tegument proteins and capsids during the assembly and egress processes. Also participates in viral entry at the fusion step probably by regulating the core fusion machinery. The sequence is that of Cytoplasmic envelopment protein 3 from Human herpesvirus 1 (strain KOS) (HHV-1).